Here is a 299-residue protein sequence, read N- to C-terminus: Regucalcin (299 aa).

Glu18 is a binding site for a divalent metal cation. Residues Arg101, Asn103, and Glu121 each coordinate substrate. At Lys144 the chain carries N6-succinyllysine. A divalent metal cation is bound by residues Asn154 and Asp204. Asp204 functions as the Proton donor/acceptor in the catalytic mechanism. N6-succinyllysine is present on residues Lys244 and Lys253.

Belongs to the SMP-30/CGR1 family. In terms of assembly, monomer. It depends on Zn(2+) as a cofactor. Requires Mn(2+) as cofactor. The cofactor is Ca(2+). Mg(2+) is required as a cofactor.

The protein localises to the cytoplasm. It catalyses the reaction D-glucono-1,5-lactone + H2O = D-gluconate + H(+). Functionally, gluconolactonase with low activity towards other sugar lactones, including gulonolactone and galactonolactone. Can also hydrolyze diisopropyl phosphorofluoridate and phenylacetate (in vitro). Calcium-binding protein. Modulates Ca(2+) signaling, and Ca(2+)-dependent cellular processes and enzyme activities. This Pongo abelii (Sumatran orangutan) protein is Regucalcin (RGN).